We begin with the raw amino-acid sequence, 200 residues long: MASKIEILKANLEAALGARVVSLTEAIGELTLVVKASDYLEVAKTLRDDPKLCFEQLIDLCGVDYQTYGDGAYDGPRFAAVSQLLSVTNNWRLRLRVFAPDDDLPIVASLVDIWTSANWYEREAFDLYGLVFEGHPDLRRILTDYGFIGHPFRKDFPVSGYVEMRYDPEEKRVVYQPVTIEPREITPRVIREDRYGGLKH.

The protein belongs to the complex I 30 kDa subunit family. In terms of assembly, NDH-1 is composed of 14 different subunits. Subunits NuoB, C, D, E, F, and G constitute the peripheral sector of the complex.

It localises to the cell inner membrane. The enzyme catalyses a quinone + NADH + 5 H(+)(in) = a quinol + NAD(+) + 4 H(+)(out). Functionally, NDH-1 shuttles electrons from NADH, via FMN and iron-sulfur (Fe-S) centers, to quinones in the respiratory chain. The immediate electron acceptor for the enzyme in this species is believed to be ubiquinone. Couples the redox reaction to proton translocation (for every two electrons transferred, four hydrogen ions are translocated across the cytoplasmic membrane), and thus conserves the redox energy in a proton gradient. The protein is NADH-quinone oxidoreductase subunit C of Burkholderia ambifaria (strain ATCC BAA-244 / DSM 16087 / CCUG 44356 / LMG 19182 / AMMD) (Burkholderia cepacia (strain AMMD)).